Consider the following 145-residue polypeptide: Large ribosomal subunit protein uL16 (145 aa).

This sequence belongs to the universal ribosomal protein uL16 family. Part of the 50S ribosomal subunit.

In terms of biological role, binds 23S rRNA and is also seen to make contacts with the A and possibly P site tRNAs. This Exiguobacterium sibiricum (strain DSM 17290 / CCUG 55495 / CIP 109462 / JCM 13490 / 255-15) protein is Large ribosomal subunit protein uL16.